The sequence spans 298 residues: ADP/ATP translocase 3 (298 aa).

Position 1 is an N-acetylmethionine (M1). Topologically, residues 1–7 (MTEQAIS) are mitochondrial intermembrane. T2 is modified (N-acetylthreonine; in ADP/ATP translocase 3, N-terminally processed). The Solcar 1 repeat unit spans residues 6-98 (ISFAKDFLAG…FAFKDKYKQI (93 aa)). A helical membrane pass occupies residues 8–37 (FAKDFLAGGIAAAISKTAVAPIERVKLLLQ). The Mitochondrial matrix portion of the chain corresponds to 38-74 (VQHASKQIAADKQYKGIVDCIVRIPKEQGVLSFWRGN). K52 bears the N6,N6,N6-trimethyllysine mark. A helical membrane pass occupies residues 75 to 99 (LANVIRYFPTQALNFAFKDKYKQIF). Residues R80 and K92 each contribute to the ADP site. Residues 100–109 (LGGVDKHTQF) lie on the Mitochondrial intermembrane side of the membrane. At K105 the chain carries N6-acetyllysine. A helical membrane pass occupies residues 110 to 130 (WRYFAGNLASGGAAGATSLCF). Solcar repeat units follow at residues 111–201 (RYFA…AKGM) and 212–297 (VSWM…LKKV). The Mitochondrial matrix portion of the chain corresponds to 131–178 (VYPLDFARTRLAADVGKSATEREFKGLGDCLVKITKSDGIRGLYQGFN). Residues 179–199 (VSVQGIIIYRAAYFGVYGTAK) traverse the membrane as a helical segment. The Mitochondrial intermembrane portion of the chain corresponds to 200–210 (GMLPDPRNTHI). A helical transmembrane segment spans residues 211–231 (VVSWMIAQTVTAVAGVFSYPF). At 232–273 (DTVRRRMMMQSGRKGADIMYKGTLDCWRKIFKDEGGKAFFKG) the chain is on the mitochondrial matrix side. Position 235 (R235) interacts with ADP. Residues 235–240 (RRRMMM) form an important for transport activity region. The short motif at 235-240 (RRRMMM) is the Nucleotide carrier signature motif element. Position 268 is an N6-acetyllysine (K268). Residues 274–291 (AWSNVLRGMGGAFVLVLY) traverse the membrane as a helical segment. Residues 292-298 (DELKKVI) lie on the Mitochondrial intermembrane side of the membrane.

Belongs to the mitochondrial carrier (TC 2.A.29) family. In terms of assembly, monomer. Found in a complex with ARL2, ARL2BP and SLC25A6/ANT3. Trimethylated by ANTKMT at Lys-52.

Its subcellular location is the mitochondrion inner membrane. It is found in the membrane. It carries out the reaction ADP(in) + ATP(out) = ADP(out) + ATP(in). The catalysed reaction is H(+)(in) = H(+)(out). Its activity is regulated as follows. The matrix-open state (m-state) is inhibited by the membrane-permeable bongkrekic acid (BKA). The cytoplasmic-open state (c-state) is inhibited by the membrane-impermeable toxic inhibitor carboxyatractyloside (CATR). Proton transporter activity is inhibited by ADP:ATP antiporter activity. Its function is as follows. ADP:ATP antiporter that mediates import of ADP into the mitochondrial matrix for ATP synthesis, and export of ATP out to fuel the cell. Cycles between the cytoplasmic-open state (c-state) and the matrix-open state (m-state): operates by the alternating access mechanism with a single substrate-binding site intermittently exposed to either the cytosolic (c-state) or matrix (m-state) side of the inner mitochondrial membrane. In addition to its ADP:ATP antiporter activity, also involved in mitochondrial uncoupling and mitochondrial permeability transition pore (mPTP) activity. Plays a role in mitochondrial uncoupling by acting as a proton transporter: proton transport uncouples the proton flows via the electron transport chain and ATP synthase to reduce the efficiency of ATP production and cause mitochondrial thermogenesis. Proton transporter activity is inhibited by ADP:ATP antiporter activity, suggesting that SLC25A6/ANT3 acts as a master regulator of mitochondrial energy output by maintaining a delicate balance between ATP production (ADP:ATP antiporter activity) and thermogenesis (proton transporter activity). Proton transporter activity requires free fatty acids as cofactor, but does not transport it. Also plays a key role in mPTP opening, a non-specific pore that enables free passage of the mitochondrial membranes to solutes of up to 1.5 kDa, and which contributes to cell death. It is however unclear if SLC25A6/ANT3 constitutes a pore-forming component of mPTP or regulates it. This chain is ADP/ATP translocase 3, found in Sus scrofa (Pig).